The primary structure comprises 474 residues: Siroheme synthase (474 aa).

The precorrin-2 dehydrogenase /sirohydrochlorin ferrochelatase stretch occupies residues 1-203 (MDYLPIFLKL…GRAEDAERVL (203 aa)). Residues 22 to 23 (EV) and 43 to 44 (AS) each bind NAD(+). Positions 219–474 (GSVALVGAGP…QETEGRSGNG (256 aa)) are uroporphyrinogen-III C-methyltransferase. An S-adenosyl-L-methionine-binding site is contributed by proline 228. Aspartate 251 serves as the catalytic Proton acceptor. Lysine 273 (proton donor) is an active-site residue. S-adenosyl-L-methionine-binding positions include 304–306 (GGD), isoleucine 309, 334–335 (TA), methionine 387, and glycine 416.

This sequence in the N-terminal section; belongs to the precorrin-2 dehydrogenase / sirohydrochlorin ferrochelatase family. It in the C-terminal section; belongs to the precorrin methyltransferase family.

It catalyses the reaction uroporphyrinogen III + 2 S-adenosyl-L-methionine = precorrin-2 + 2 S-adenosyl-L-homocysteine + H(+). It carries out the reaction precorrin-2 + NAD(+) = sirohydrochlorin + NADH + 2 H(+). The catalysed reaction is siroheme + 2 H(+) = sirohydrochlorin + Fe(2+). Its pathway is cofactor biosynthesis; adenosylcobalamin biosynthesis; precorrin-2 from uroporphyrinogen III: step 1/1. It participates in cofactor biosynthesis; adenosylcobalamin biosynthesis; sirohydrochlorin from precorrin-2: step 1/1. It functions in the pathway porphyrin-containing compound metabolism; siroheme biosynthesis; precorrin-2 from uroporphyrinogen III: step 1/1. The protein operates within porphyrin-containing compound metabolism; siroheme biosynthesis; siroheme from sirohydrochlorin: step 1/1. Its pathway is porphyrin-containing compound metabolism; siroheme biosynthesis; sirohydrochlorin from precorrin-2: step 1/1. Functionally, multifunctional enzyme that catalyzes the SAM-dependent methylations of uroporphyrinogen III at position C-2 and C-7 to form precorrin-2 via precorrin-1. Then it catalyzes the NAD-dependent ring dehydrogenation of precorrin-2 to yield sirohydrochlorin. Finally, it catalyzes the ferrochelation of sirohydrochlorin to yield siroheme. The sequence is that of Siroheme synthase from Methylococcus capsulatus (strain ATCC 33009 / NCIMB 11132 / Bath).